The sequence spans 31 residues: Photosystem II reaction center protein T (31 aa).

The chain crosses the membrane as a helical span at residues Ser3–Phe23.

It belongs to the PsbT family. PSII is composed of 1 copy each of membrane proteins PsbA, PsbB, PsbC, PsbD, PsbE, PsbF, PsbH, PsbI, PsbJ, PsbK, PsbL, PsbM, PsbT, PsbX, PsbY, PsbZ, Psb30/Ycf12, peripheral proteins PsbO, CyanoQ (PsbQ), PsbU, PsbV and a large number of cofactors. It forms dimeric complexes.

The protein localises to the cellular thylakoid membrane. Found at the monomer-monomer interface of the photosystem II (PS II) dimer, plays a role in assembly and dimerization of PSII. PSII is a light-driven water plastoquinone oxidoreductase, using light energy to abstract electrons from H(2)O, generating a proton gradient subsequently used for ATP formation. The chain is Photosystem II reaction center protein T from Gloeothece citriformis (strain PCC 7424) (Cyanothece sp. (strain PCC 7424)).